The primary structure comprises 181 residues: Der GTPase-activating protein YihI (181 aa).

The tract at residues 1 to 73 is disordered; sequence MSRIKKARKP…DPRIGSKKPI (73 aa). The segment covering 22-32 has biased composition (basic and acidic residues); the sequence is NRTDRDVESRE. Residues 33–42 show a composition bias toward basic residues; the sequence is IKRKRKRKGL. Positions 55-67 are enriched in basic and acidic residues; that stretch reads QARRNAQKKDPRI.

Belongs to the YihI family. As to quaternary structure, interacts with Der.

In terms of biological role, a GTPase-activating protein (GAP) that modifies Der/EngA GTPase function. May play a role in ribosome biogenesis. The polypeptide is Der GTPase-activating protein YihI (Aliivibrio fischeri (strain ATCC 700601 / ES114) (Vibrio fischeri)).